A 126-amino-acid chain; its full sequence is Protein ApaG (126 aa).

One can recognise an ApaG domain in the interval 2–126 (SDPRYQIDVS…FRLAVPGALH (125 aa)).

The chain is Protein ApaG from Pseudomonas putida (strain W619).